Here is a 146-residue protein sequence, read N- to C-terminus: Hemoglobin subunit beta (146 aa).

V1 bears the N-acetylvaline mark. The 145-residue stretch at 2–146 (HLTDAEKAAI…VATALGHKYH (145 aa)) folds into the Globin domain. K59 is modified (N6-acetyllysine). A heme b-binding site is contributed by H63. K82 carries the N6-acetyllysine modification. H92 contacts heme b. S-nitrosocysteine is present on C93. K144 is modified (N6-acetyllysine).

This sequence belongs to the globin family. As to quaternary structure, heterotetramer of two alpha chains and two beta chains. As to expression, red blood cells.

Its function is as follows. Involved in oxygen transport from the lung to the various peripheral tissues. In Ondatra zibethicus (Muskrat), this protein is Hemoglobin subunit beta (HBB).